Reading from the N-terminus, the 84-residue chain is RNA-binding protein Hfq (84 aa).

The region spanning 9–69 (DRFLNILRTN…VSTIMPESFV (61 aa)) is the Sm domain.

It belongs to the Hfq family. In terms of assembly, homohexamer.

In terms of biological role, RNA chaperone that binds small regulatory RNA (sRNAs) and mRNAs to facilitate mRNA translational regulation in response to envelope stress, environmental stress and changes in metabolite concentrations. Also binds with high specificity to tRNAs. The protein is RNA-binding protein Hfq of Thermosipho africanus (strain TCF52B).